Reading from the N-terminus, the 393-residue chain is Aspartate aminotransferase (393 aa).

L-aspartate-binding residues include Gly-38, Trp-124, and Asn-174. An N6-(pyridoxal phosphate)lysine modification is found at Lys-237.

The protein belongs to the class-I pyridoxal-phosphate-dependent aminotransferase family. As to quaternary structure, homodimer. Requires pyridoxal 5'-phosphate as cofactor.

It is found in the cytoplasm. It catalyses the reaction L-aspartate + 2-oxoglutarate = oxaloacetate + L-glutamate. In Geobacillus stearothermophilus (Bacillus stearothermophilus), this protein is Aspartate aminotransferase (aspC).